We begin with the raw amino-acid sequence, 275 residues long: ADP-dependent (S)-NAD(P)H-hydrate dehydratase (275 aa).

A YjeF C-terminal domain is found at 5-273 (TDEILAKVIK…EEIPLFMKKY (269 aa)). Positions 40, 103, and 151 each coordinate (6S)-NADPHX. Glycine 214 serves as a coordination point for AMP. Residue aspartate 215 participates in (6S)-NADPHX binding.

The protein belongs to the NnrD/CARKD family. Homotetramer. Requires Mg(2+) as cofactor.

It catalyses the reaction (6S)-NADHX + ADP = AMP + phosphate + NADH + H(+). It carries out the reaction (6S)-NADPHX + ADP = AMP + phosphate + NADPH + H(+). Catalyzes the dehydration of the S-form of NAD(P)HX at the expense of ADP, which is converted to AMP. Together with NAD(P)HX epimerase, which catalyzes the epimerization of the S- and R-forms, the enzyme allows the repair of both epimers of NAD(P)HX, a damaged form of NAD(P)H that is a result of enzymatic or heat-dependent hydration. The chain is ADP-dependent (S)-NAD(P)H-hydrate dehydratase from Lactococcus lactis subsp. lactis (strain IL1403) (Streptococcus lactis).